A 512-amino-acid chain; its full sequence is D-alanine--D-alanyl carrier protein ligase (512 aa).

152–153 (TS) lines the ATP pocket. D-alanine is bound at residue Asp-199. ATP is bound at residue 294–299 (NAYGPT). Val-303 is a binding site for D-alanine. ATP-binding positions include Asp-385, 397-400 (YGGR), and Lys-499. Lys-499 contacts D-alanine.

This sequence belongs to the ATP-dependent AMP-binding enzyme family. DltA subfamily.

The protein localises to the cytoplasm. The catalysed reaction is holo-[D-alanyl-carrier protein] + D-alanine + ATP = D-alanyl-[D-alanyl-carrier protein] + AMP + diphosphate. It functions in the pathway cell wall biogenesis; lipoteichoic acid biosynthesis. Its function is as follows. Catalyzes the first step in the D-alanylation of lipoteichoic acid (LTA), the activation of D-alanine and its transfer onto the D-alanyl carrier protein (Dcp) DltC. In an ATP-dependent two-step reaction, forms a high energy D-alanyl-AMP intermediate, followed by transfer of the D-alanyl residue as a thiol ester to the phosphopantheinyl prosthetic group of the Dcp. D-alanylation of LTA plays an important role in modulating the properties of the cell wall in Gram-positive bacteria, influencing the net charge of the cell wall. This Streptococcus equi subsp. equi (strain 4047) protein is D-alanine--D-alanyl carrier protein ligase.